Here is a 397-residue protein sequence, read N- to C-terminus: Elongation factor Tu (397 aa).

The tr-type G domain occupies lysine 10 to valine 207. The interval glycine 19 to threonine 26 is G1. Glycine 19 to threonine 26 is a binding site for GTP. Residue threonine 26 participates in Mg(2+) binding. The segment at glycine 63–asparagine 67 is G2. The interval aspartate 84 to glycine 87 is G3. GTP-binding positions include aspartate 84–histidine 88 and asparagine 139–aspartate 142. The interval asparagine 139–aspartate 142 is G4. The tract at residues serine 177–leucine 179 is G5.

This sequence belongs to the TRAFAC class translation factor GTPase superfamily. Classic translation factor GTPase family. EF-Tu/EF-1A subfamily. As to quaternary structure, monomer.

Its subcellular location is the cytoplasm. It catalyses the reaction GTP + H2O = GDP + phosphate + H(+). Functionally, GTP hydrolase that promotes the GTP-dependent binding of aminoacyl-tRNA to the A-site of ribosomes during protein biosynthesis. This chain is Elongation factor Tu, found in Leifsonia xyli subsp. xyli (strain CTCB07).